Here is a 414-residue protein sequence, read N- to C-terminus: Sensor protein CutS (414 aa).

Residues 1 to 15 (MATTPAPPGAPPKPT) are compositionally biased toward pro residues. The interval 1-21 (MATTPAPPGAPPKPTWDPRSA) is disordered. Helical transmembrane passes span 37 to 57 (LLYG…IYLL) and 121 to 141 (SLLA…AMAG). An HAMP domain is found at 142–194 (RVLSPLGRITRTARAVAGSDLSRRIELDGPDDELKELADTFDDMLERLQRAFT). Residues 202 to 414 (NASHELRTPL…GLVMRVTLPV (213 aa)) enclose the Histidine kinase domain. Residue His-205 is modified to Phosphohistidine; by autocatalysis.

The protein localises to the cell membrane. It catalyses the reaction ATP + protein L-histidine = ADP + protein N-phospho-L-histidine.. Its function is as follows. Member of the two-component regulatory system CutS/CutR, involved in the regulation of copper metabolism. In Streptomyces coelicolor (strain ATCC BAA-471 / A3(2) / M145), this protein is Sensor protein CutS (cutS).